The following is a 173-amino-acid chain: Alpha-crystallin A chain (173 aa).

Met-1 carries the post-translational modification N-acetylmethionine. Positions 1 to 63 (MDIAIQHPWF…RTVLDSGISE (63 aa)) are required for complex formation with BFSP1 and BFSP2. Gln-6 carries the deamidated glutamine; partial modification. At Ser-45 the chain carries Phosphoserine. Gln-50 bears the Deamidated glutamine; partial mark. The sHSP domain maps to 52-162 (LFRTVLDSGI…GHSERAIPVS (111 aa)). The residue at position 70 (Lys-70) is an N6-acetyllysine. Gln-90 is modified (deamidated glutamine; partial). Residue Lys-99 is modified to N6-acetyllysine. His-100 is a binding site for Zn(2+). Asn-101 is modified (deamidated asparagine; partial). Positions 102 and 107 each coordinate Zn(2+). Ser-122 carries the phosphoserine modification. Deamidated asparagine; partial is present on Asn-123. The interval 144–173 (PKIPSGMDAGHSERAIPVSREEKPGSAPSS) is disordered. Positions 153–167 (GHSERAIPVSREEKP) are enriched in basic and acidic residues. His-154 contacts Zn(2+). The O-linked (GlcNAc) serine glycan is linked to Ser-162.

The protein belongs to the small heat shock protein (HSP20) family. In terms of assembly, heteromer composed of three CRYAA and one CRYAB subunits. Inter-subunit bridging via zinc ions enhances stability, which is crucial as there is no protein turn over in the lens. Can also form homodimers and homotetramers (dimers of dimers) which serve as the building blocks of homooligomers. Within homooligomers, the zinc-binding motif is created from residues of 3 different molecules. His-100 and Glu-102 from one molecule are ligands of the zinc ion, and His-107 and His-154 residues from additional molecules complete the site with tetrahedral coordination geometry. Part of a complex required for lens intermediate filament formation composed of BFSP1, BFSP2 and CRYAA. Acetylation at Lys-70 may increase chaperone activity. Post-translationally, undergoes age-dependent proteolytical cleavage at the C-terminus.

It localises to the cytoplasm. The protein resides in the nucleus. In terms of biological role, contributes to the transparency and refractive index of the lens. Acts as a chaperone, preventing aggregation of various proteins under a wide range of stress conditions. Required for the correct formation of lens intermediate filaments as part of a complex composed of BFSP1, BFSP2 and CRYAA. In Equus caballus (Horse), this protein is Alpha-crystallin A chain (CRYAA).